The sequence spans 173 residues: Protein C2 (173 aa).

Residues 69 to 85 (CNCHFTIHHECNRGFSH) fold into a zinc finger.

Belongs to the geminiviridae transcriptional activator protein family. In terms of assembly, monomer. Interacting with and inactivating host adenosine kinase 2 (ADK2) in the cytoplasm. Interacts with and inhibits host SNF1 kinase.

The protein localises to the host cytoplasm. Acts as a suppressor of RNA-mediated gene silencing, also known as post-transcriptional gene silencing (PTGS), a mechanism of plant viral defense that limits the accumulation of viral RNAs. Suppresses the host RNA silencing by inhibiting adenosine kinase 2 (ADK2), a kinase involved in a general methylation pathway. Also suppresses the host basal defense by interacting with and inhibiting SNF1 kinase, a key regulator of cell metabolism implicated in innate antiviral defense. Determines pathogenicity. The sequence is that of Protein C2 from Beet curly top virus (strain California/Logan) (BCTV).